The sequence spans 372 residues: Aminomethyltransferase (372 aa).

The protein belongs to the GcvT family. As to quaternary structure, the glycine cleavage system is composed of four proteins: P, T, L and H.

It catalyses the reaction N(6)-[(R)-S(8)-aminomethyldihydrolipoyl]-L-lysyl-[protein] + (6S)-5,6,7,8-tetrahydrofolate = N(6)-[(R)-dihydrolipoyl]-L-lysyl-[protein] + (6R)-5,10-methylene-5,6,7,8-tetrahydrofolate + NH4(+). Functionally, the glycine cleavage system catalyzes the degradation of glycine. The polypeptide is Aminomethyltransferase (Streptomyces coelicolor (strain ATCC BAA-471 / A3(2) / M145)).